The primary structure comprises 249 residues: O-methyltransferase adaD (249 aa).

Residues 1-15 show a composition bias toward low complexity; the sequence is MSSVTLTTTTTTTST. Positions 1 to 26 are disordered; it reads MSSVTLTTTTTTTSTPPKPTPKDEPQ.

Belongs to the methyltransferase superfamily.

The catalysed reaction is 2-acetyl-3,4a,8,10,11,12a-hexahydroxy-1,4,4a,5,12,12a-hexahydrotetracene-1,12-dione + S-adenosyl-L-methionine = TAN-1612 + S-adenosyl-L-homocysteine + H(+). It functions in the pathway secondary metabolite biosynthesis. O-methyltransferase; part of the gene cluster that mediates the biosynthesis of the linear tetracyclic TAN-1612 neuropeptide Y receptor antagonist. The decaketide backbone of TAN-1612 is synthesized by the non-reducing polyketide synthase adaA via condensation of one acetyl-CoA starter unit with 9 malonyl-CoA units. The FAD-dependent monooxygenase adaC then performs hydroxylation at C2 while the polaketide chain is still attached to the NRPKS adaA. The alpha-hydroxylation step at C2 appears to be crucial for the following C18-C1 Claisen cyclization and release of the C9-hydroxyl version of TAN-1612 from the NRPKS adaA, two steps performed by the lactamase-like protein adaB. Finally, the O-methyltransferase adaD performs the C9 O-methylation to complete the biosynthesis of TAN-1612. This Aspergillus niger (strain ATCC MYA-4892 / CBS 513.88 / FGSC A1513) protein is O-methyltransferase adaD.